Consider the following 74-residue polypeptide: MDSEVLRDGRILDLIDDAWREDKLPYEDVTIPLNELPEPEQDNGGATESVKEQEMKWADLALQYLHENISSSGS.

It belongs to the APC13 family. In terms of assembly, the APC/C is composed of at least 12 subunits.

The protein localises to the nucleus. It participates in protein modification; protein ubiquitination. In terms of biological role, component of the anaphase promoting complex/cyclosome (APC/C), a cell cycle-regulated E3 ubiquitin ligase that controls progression through mitosis and the G1 phase of the cell cycle. The APC/C complex acts by mediating ubiquitination and subsequent degradation of target proteins: it mainly mediates the formation of 'Lys-11'-linked polyubiquitin chains and, to a lower extent, the formation of 'Lys-48'- and 'Lys-63'-linked polyubiquitin chains. The APC/C complex catalyzes assembly of branched 'Lys-11'-/'Lys-48'-linked branched ubiquitin chains on target proteins. This chain is Anaphase-promoting complex subunit 13 (anapc13), found in Xenopus tropicalis (Western clawed frog).